Here is a 170-residue protein sequence, read N- to C-terminus: Translation machinery-associated protein 16 homolog (170 aa).

This sequence belongs to the TMA16 family.

This chain is Translation machinery-associated protein 16 homolog, found in Dictyostelium discoideum (Social amoeba).